We begin with the raw amino-acid sequence, 156 residues long: ATP synthase subunit b (156 aa).

A helical transmembrane segment spans residues 3–23; sequence ITFTIFAQSLAFAALIWIVAT.

It belongs to the ATPase B chain family. F-type ATPases have 2 components, F(1) - the catalytic core - and F(0) - the membrane proton channel. F(1) has five subunits: alpha(3), beta(3), gamma(1), delta(1), epsilon(1). F(0) has three main subunits: a(1), b(2) and c(10-14). The alpha and beta chains form an alternating ring which encloses part of the gamma chain. F(1) is attached to F(0) by a central stalk formed by the gamma and epsilon chains, while a peripheral stalk is formed by the delta and b chains.

The protein localises to the cell inner membrane. F(1)F(0) ATP synthase produces ATP from ADP in the presence of a proton or sodium gradient. F-type ATPases consist of two structural domains, F(1) containing the extramembraneous catalytic core and F(0) containing the membrane proton channel, linked together by a central stalk and a peripheral stalk. During catalysis, ATP synthesis in the catalytic domain of F(1) is coupled via a rotary mechanism of the central stalk subunits to proton translocation. In terms of biological role, component of the F(0) channel, it forms part of the peripheral stalk, linking F(1) to F(0). This Xylella fastidiosa (strain M23) protein is ATP synthase subunit b.